Consider the following 98-residue polypeptide: NADH-ubiquinone oxidoreductase chain 4L (98 aa).

The next 3 helical transmembrane spans lie at 1–21 (MASI…GVLI), 26–46 (LMST…MMTL), and 59–79 (APLI…ALLV).

This sequence belongs to the complex I subunit 4L family. In terms of assembly, core subunit of respiratory chain NADH dehydrogenase (Complex I) which is composed of 45 different subunits.

It is found in the mitochondrion inner membrane. The enzyme catalyses a ubiquinone + NADH + 5 H(+)(in) = a ubiquinol + NAD(+) + 4 H(+)(out). Its function is as follows. Core subunit of the mitochondrial membrane respiratory chain NADH dehydrogenase (Complex I) which catalyzes electron transfer from NADH through the respiratory chain, using ubiquinone as an electron acceptor. Part of the enzyme membrane arm which is embedded in the lipid bilayer and involved in proton translocation. In Caenolestes fuliginosus (Shrew opossum), this protein is NADH-ubiquinone oxidoreductase chain 4L (MT-ND4L).